A 716-amino-acid polypeptide reads, in one-letter code: Cyclic nucleotide-gated ion channel 1 (716 aa).

Residues 1-97 lie on the Cytoplasmic side of the membrane; sequence MNFRQEKFVR…QGPFLQRWNK (97 aa). Residues 98-118 traverse the membrane as a helical segment; sequence IFVLACIIAVSLDPLFFYVPI. At 119 to 132 the chain is on the extracellular side; sequence IDDAKKCLGIDKKM. A helical transmembrane segment spans residues 133 to 153; that stretch reads EITASVLRSFTDVFYVLHIIF. Over 154–187 the chain is Cytoplasmic; it reads QFRTGFIAPSSRVFGRGVLVEDKREIAKRYLSSH. A helical transmembrane segment spans residues 188 to 208; that stretch reads FIIDILAVLPLPQMVILIIIP. Over 209–220 the chain is Extracellular; the sequence is HMRGSSSLNTKN. A helical membrane pass occupies residues 221–241; sequence MLKFIVFFQYIPRFIRIYPLY. Residues 242–259 lie on the Cytoplasmic side of the membrane; the sequence is KEVTRTSGILTETAWAGA. The helical transmembrane segment at 260 to 280 threads the bilayer; sequence AFNLFLYMLASHVFGAFWYLF. The Extracellular portion of the chain corresponds to 281–379; it reads SIERETVCWK…GQNLKTSTYI (99 aa). Residues 380–400 form a helical membrane-spanning segment; that stretch reads WEICFAVFISIAGLVLFSFLI. Residues 401–716 lie on the Cytoplasmic side of the membrane; it reads GNMQTYLQST…PAEPDFNSDD (316 aa). Residues 486–610 and Glu557 contribute to the a nucleoside 3',5'-cyclic phosphate site; that span reads MFEK…SKQL. Residues 602 to 617 form a calmodulin-binding region; sequence FRRLHSKQLRHTFRYY. In terms of domain architecture, IQ spans 622–651; that stretch reads KTWAACFIQAAWRRYIKKKLEESLKEEENR. The tract at residues 689-716 is disordered; that stretch reads SVRKPRMPERMPPMLLQKPAEPDFNSDD.

It belongs to the cyclic nucleotide-gated cation channel (TC 1.A.1.5) family. In terms of assembly, homotetramer or heterotetramer (Potential). Binds calmodulin-2/3/5 with a higher affinity than calmodulin-1/4. As to expression, expressed in the whole plant but only weakly in roots.

The protein resides in the cell membrane. Functionally, acts as a cyclic nucleotide-gated ion channel. Can be activated by cyclic AMP which leads to an opening of the cation channel. May be responsible for cAMP-induced calcium entry in cells and thus should be involved in the calcium signal transduction. Could transport K(+), Na(+) and Pb(2+). The protein is Cyclic nucleotide-gated ion channel 1 (CNGC1) of Arabidopsis thaliana (Mouse-ear cress).